Reading from the N-terminus, the 127-residue chain is Mitochondrial pyruvate carrier 2 (127 aa).

Over 2-40 the chain is Mitochondrial matrix; it reads AAAGARGLRATYHRLMDKVELLLPKKLRPLYNHPAGPRT. The residue at position 26 (Lys26) is an N6-acetyllysine. The chain crosses the membrane as a helical span at residues 41-61; that stretch reads VFFWAPIMKWGLVCAGLADMA. The Mitochondrial intermembrane portion of the chain corresponds to 62 to 72; the sequence is RPAEKLSTAQS. The chain crosses the membrane as a helical span at residues 73–90; sequence TVLMATGFIWSRYSLVII. The Mitochondrial matrix segment spans residues 91–95; sequence PKNWS. A helical membrane pass occupies residues 96–115; that stretch reads LFAVNFFVGSAGASQLFRIW. Residues 116 to 127 lie on the Mitochondrial intermembrane side of the membrane; it reads KYNQELKSKGIQ.

It belongs to the mitochondrial pyruvate carrier (MPC) (TC 2.A.105) family. Homodimer. Homooligomer. Forms heterodimers with MPC1 and MPC1L. The heterodimer is the more stable and dominant form. In terms of tissue distribution, liver, kidney, and brain.

It localises to the mitochondrion inner membrane. The enzyme catalyses pyruvate(out) + H(+)(out) = pyruvate(in) + H(+)(in). Its function is as follows. Mediates the uptake of pyruvate into mitochondria. The sequence is that of Mitochondrial pyruvate carrier 2 (Mpc2) from Rattus norvegicus (Rat).